The primary structure comprises 366 residues: Galactoside alpha-(1,2)-fucosyltransferase 1 (366 aa).

At 1–8 (MWPLSHRH) the chain is on the cytoplasmic side. The helical; Signal-anchor for type II membrane protein transmembrane segment at 9–25 (LCLAFLLVCVLSAISFF) threads the bilayer. The Lumenal portion of the chain corresponds to 26 to 366 (LHIHQDSIRH…LSPLWTLAEP (341 aa)). 3 N-linked (GlcNAc...) asparagine glycosylation sites follow: asparagine 66, asparagine 302, and asparagine 328.

It belongs to the glycosyltransferase 11 family.

Its subcellular location is the golgi apparatus. It is found in the golgi stack membrane. The enzyme catalyses a beta-D-galactosyl-(1-&gt;4)-N-acetyl-beta-D-glucosaminyl derivative + GDP-beta-L-fucose = an alpha-L-Fuc-(1-&gt;2)-beta-D-Gal-(1-&gt;4)-beta-D-GlcNAc derivative + GDP + H(+). It carries out the reaction a ganglioside GA1 + GDP-beta-L-fucose = a ganglioside Fuc-GA1 + GDP + H(+). The catalysed reaction is a beta-D-Gal-(1-&gt;3)-beta-D-GlcNAc-(1-&gt;3)-beta-D-Gal-(1-&gt;4)-beta-D-Glc-(1&lt;-&gt;1')-Cer(d18:1(4E)) + GDP-beta-L-fucose = alpha-L-fucosyl-(1-&gt;2)- beta-D-galactosyl-(1-&gt;3)-N-acetyl-beta-D-glucosaminyl-(1-&gt;3)-beta-D-galactosyl-(1-&gt;4)-beta-D-glucosyl-(1&lt;-&gt;1')-N-acylsphing-4-enine + GDP + H(+). It catalyses the reaction a neolactoside nLc4Cer(d18:1(4E)) + GDP-beta-L-fucose = a neolactoside IV(2)-alpha-Fuc-nLc4Cer(d18:1(4E)) + GDP + H(+). The enzyme catalyses a ganglioside GM1 + GDP-beta-L-fucose = a ganglioside Fuc-GM1 + GDP + H(+). It carries out the reaction beta-D-galactosyl-(1-&gt;3)-N-acetyl-D-galactosamine + GDP-beta-L-fucose = alpha-L-fucosyl-(1-&gt;2)-beta-D-galactosyl-(1-&gt;3)-N-acetyl-D-galactosamine + GDP + H(+). It participates in protein modification; protein glycosylation. Catalyzes the transfer of L-fucose, from a guanosine diphosphate-beta-L-fucose, to the terminal galactose residue of glycoconjugates through an alpha(1,2) linkage leading to H antigen synthesis that is an intermediate substrate in the synthesis of ABO blood group antigens. H antigen is essential for maturation of the glomerular layer of the main olfactory bulb, in cell migration and early cell-cell contacts during tumor associated angiogenesis. Preferentially fucosylates soluble lactose and to a lesser extent fucosylates glycolipids gangliosides GA1 and GM1a. This chain is Galactoside alpha-(1,2)-fucosyltransferase 1, found in Aotus azarae (Azara's night monkey).